A 108-amino-acid polypeptide reads, in one-letter code: Parvalbumin beta (108 aa).

N-acetylalanine is present on Ala1. EF-hand domains are found at residues 38–73 and 77–108; these read KSNE…FSAG and LTKT…LVKA. Ca(2+) is bound by residues Asp51, Asp53, Ser55, Phe57, Glu59, Glu62, Asp90, Asp92, Asp94, Lys96, and Glu101.

The protein belongs to the parvalbumin family.

Its function is as follows. In muscle, parvalbumin is thought to be involved in relaxation after contraction. It binds two calcium ions. The protein is Parvalbumin beta of Latimeria chalumnae (Coelacanth).